A 313-amino-acid chain; its full sequence is Porphobilinogen deaminase (313 aa).

S-(dipyrrolylmethanemethyl)cysteine is present on cysteine 242.

The protein belongs to the HMBS family. Monomer. Requires dipyrromethane as cofactor.

The catalysed reaction is 4 porphobilinogen + H2O = hydroxymethylbilane + 4 NH4(+). Its pathway is porphyrin-containing compound metabolism; protoporphyrin-IX biosynthesis; coproporphyrinogen-III from 5-aminolevulinate: step 2/4. Tetrapolymerization of the monopyrrole PBG into the hydroxymethylbilane pre-uroporphyrinogen in several discrete steps. This chain is Porphobilinogen deaminase, found in Salmonella dublin (strain CT_02021853).